A 365-amino-acid polypeptide reads, in one-letter code: Histidinol-phosphate aminotransferase (365 aa).

Residues 1-22 (MSRPVPNPGILDIAPYTPGKSP) are disordered. The residue at position 221 (Lys221) is an N6-(pyridoxal phosphate)lysine.

Belongs to the class-II pyridoxal-phosphate-dependent aminotransferase family. Histidinol-phosphate aminotransferase subfamily. In terms of assembly, homodimer. Requires pyridoxal 5'-phosphate as cofactor.

It carries out the reaction L-histidinol phosphate + 2-oxoglutarate = 3-(imidazol-4-yl)-2-oxopropyl phosphate + L-glutamate. It participates in amino-acid biosynthesis; L-histidine biosynthesis; L-histidine from 5-phospho-alpha-D-ribose 1-diphosphate: step 7/9. This Rhodopseudomonas palustris (strain BisA53) protein is Histidinol-phosphate aminotransferase.